The chain runs to 359 residues: Carbamoyl phosphate synthase small chain (359 aa).

Residues 1 to 169 are CPSase; the sequence is MTKRILVLED…TKTSYPAPGV (169 aa). 3 residues coordinate L-glutamine: Ser46, Gly220, and Gly222. The 187-residue stretch at 172 to 358 folds into the Glutamine amidotransferase type-1 domain; the sequence is SVVLVDFGLK…IEMMEVFKQS (187 aa). Cys247 functions as the Nucleophile in the catalytic mechanism. L-glutamine contacts are provided by Met248, Gln251, Asn289, Gly291, and Tyr292. Catalysis depends on residues His331 and Asp333.

The protein belongs to the CarA family. As to quaternary structure, composed of two chains; the small (or glutamine) chain promotes the hydrolysis of glutamine to ammonia, which is used by the large (or ammonia) chain to synthesize carbamoyl phosphate. Tetramer of heterodimers (alpha,beta)4.

It carries out the reaction hydrogencarbonate + L-glutamine + 2 ATP + H2O = carbamoyl phosphate + L-glutamate + 2 ADP + phosphate + 2 H(+). The enzyme catalyses L-glutamine + H2O = L-glutamate + NH4(+). It participates in amino-acid biosynthesis; L-arginine biosynthesis; carbamoyl phosphate from bicarbonate: step 1/1. The protein operates within pyrimidine metabolism; UMP biosynthesis via de novo pathway; (S)-dihydroorotate from bicarbonate: step 1/3. Small subunit of the glutamine-dependent carbamoyl phosphate synthetase (CPSase). CPSase catalyzes the formation of carbamoyl phosphate from the ammonia moiety of glutamine, carbonate, and phosphate donated by ATP, constituting the first step of 2 biosynthetic pathways, one leading to arginine and/or urea and the other to pyrimidine nucleotides. The small subunit (glutamine amidotransferase) binds and cleaves glutamine to supply the large subunit with the substrate ammonia. This is Carbamoyl phosphate synthase small chain from Streptococcus pneumoniae (strain ATCC BAA-255 / R6).